A 280-amino-acid chain; its full sequence is MANKVKAEIGVIGGSGFYSFLDDVTEVRVDTPYGPPSDSLFLGEVAGRRVAFLPRHGRGHHLPPHRINYRANLWALRSVGARQVLGPCAVGGLRPEYGPGTLLVPDQFVDRTRSRPSTYFDGLPMPDGTVPNVVHVSLADPYCPTGRAAALKAARGREWEPVDGGTLVVVEGPRFGTRAESLWHRAQGWSVVGMTGHPEAALARELELCYTSLTLVTDLDAGAESGEGVSHEEVLRVFAANVDRLRGVLFDAVAALPASGERDCPCGAALGGMDPGIALP.

Residues Ser15 and 55–56 each bind phosphate; that span reads RH. Residue Met194 coordinates substrate. Thr195 contributes to the phosphate binding site. 218-220 contributes to the substrate binding site; that stretch reads DLD.

The protein belongs to the PNP/MTAP phosphorylase family. MTAP subfamily. Homohexamer. Dimer of a homotrimer.

The catalysed reaction is a purine D-ribonucleoside + phosphate = a purine nucleobase + alpha-D-ribose 1-phosphate. Its pathway is purine metabolism; purine nucleoside salvage. Functionally, purine nucleoside phosphorylase involved in purine salvage. The protein is Purine nucleoside phosphorylase of Streptomyces coelicolor (strain ATCC BAA-471 / A3(2) / M145).